We begin with the raw amino-acid sequence, 469 residues long: Transcription factor phomD (469 aa).

Positions 14–41 (CNACNESKVRCSQRKPTCARCERNGVEC) form a DNA-binding region, zn(2)-C6 fungal-type. The interval 49-118 (THKDAPPISM…QQKEEAAAAA (70 aa)) is disordered. Over residues 82–93 (KANSNSSSNWHM) the composition is skewed to polar residues. The segment covering 104 to 118 (QQQQQQQKEEAAAAA) has biased composition (low complexity).

The protein resides in the nucleus. Transcription factor; part of the gene cluster that mediates the biosynthesis of the phomopsins, a group of hexapeptide mycotoxins which infects lupins and causes lupinosis disease in livestock. May play a role in the regulation of the production of phomopsins. The polypeptide is Transcription factor phomD (Diaporthe leptostromiformis (Lupinosis disease fungus)).